Consider the following 205-residue polypeptide: Probable thymidylate kinase (205 aa).

ATP is bound at residue 9 to 16; it reads GIDGVGKS.

It belongs to the thymidylate kinase family.

The catalysed reaction is dTMP + ATP = dTDP + ADP. In Caldivirga maquilingensis (strain ATCC 700844 / DSM 13496 / JCM 10307 / IC-167), this protein is Probable thymidylate kinase.